The following is a 215-amino-acid chain: Probable transaldolase (215 aa).

Catalysis depends on lysine 83, which acts as the Schiff-base intermediate with substrate.

It belongs to the transaldolase family. Type 3B subfamily.

Its subcellular location is the cytoplasm. It catalyses the reaction D-sedoheptulose 7-phosphate + D-glyceraldehyde 3-phosphate = D-erythrose 4-phosphate + beta-D-fructose 6-phosphate. Its pathway is carbohydrate degradation; pentose phosphate pathway; D-glyceraldehyde 3-phosphate and beta-D-fructose 6-phosphate from D-ribose 5-phosphate and D-xylulose 5-phosphate (non-oxidative stage): step 2/3. Its function is as follows. Transaldolase is important for the balance of metabolites in the pentose-phosphate pathway. This chain is Probable transaldolase, found in Streptococcus agalactiae serotype III (strain NEM316).